The primary structure comprises 354 residues: Peripherin-2 (354 aa).

The Cytoplasmic segment spans residues Met-1–Asn-24. Residues Trp-25–Ile-43 traverse the membrane as a helical segment. At Glu-44 to Pro-61 the chain is on the lumenal side. A helical membrane pass occupies residues Asn-62–Lys-80. The Cytoplasmic portion of the chain corresponds to Ile-81–Lys-99. A helical transmembrane segment spans residues Pro-100–Arg-123. Over Gly-124 to Ser-264 the chain is Lumenal. N-linked (GlcNAc...) asparagine glycosylation is present at Asn-229. The chain crosses the membrane as a helical span at residues Met-265–Leu-290. The Cytoplasmic portion of the chain corresponds to Glu-291–Ser-354. Residues Gly-335–Ser-354 are disordered.

It belongs to the PRPH2/ROM1 family. Homodimer; disulfide-linked.

It localises to the membrane. May be involved in the morphogenesis of retina outer segment disks and the development and maintenance of the retina ultrastructure. In Gallus gallus (Chicken), this protein is Peripherin-2 (PRPH2).